The primary structure comprises 242 residues: Triosephosphate isomerase (242 aa).

Asparagine 8–lysine 10 contributes to the substrate binding site. Catalysis depends on histidine 98, which acts as the Electrophile. Catalysis depends on glutamate 167, which acts as the Proton acceptor. Residues glycine 173, serine 205, and glycine 226–glycine 227 contribute to the substrate site.

Belongs to the triosephosphate isomerase family. Homodimer.

Its subcellular location is the cytoplasm. The enzyme catalyses D-glyceraldehyde 3-phosphate = dihydroxyacetone phosphate. It participates in carbohydrate biosynthesis; gluconeogenesis. The protein operates within carbohydrate degradation; glycolysis; D-glyceraldehyde 3-phosphate from glycerone phosphate: step 1/1. Functionally, involved in the gluconeogenesis. Catalyzes stereospecifically the conversion of dihydroxyacetone phosphate (DHAP) to D-glyceraldehyde-3-phosphate (G3P). This chain is Triosephosphate isomerase, found in Mesomycoplasma hyopneumoniae (strain 7448) (Mycoplasma hyopneumoniae).